The chain runs to 38 residues: Mu/omega-theraphotoxin-Mb1b (38 aa).

3 cysteine pairs are disulfide-bonded: Cys-7–Cys-21, Cys-14–Cys-26, and Cys-20–Cys-33. A Serine amide modification is found at Ser-38.

The protein belongs to the neurotoxin 10 (Hwtx-1) family. 28 (Jztx-11) subfamily. Expressed by the venom gland.

The protein resides in the secreted. Functionally, paralytic toxin on insects that inhibits voltage-gated sodium (Nav) and calcium (Cav) channels in P.americana (American cockroach) dorsal unpaired median (DUM) neurons, and also inhibits the B.germanica (German cockroach) Nav channel (BgNaV1). May act as a gating-modifier toxin on Nav and as a pore blocker on Cav. In vivo, reversibly paralyzes both L.cuprina (Australian sheep blowfly) and M.domestica (housefly), but does not affect larvae of H.armigera (cotton bollworms). The polypeptide is Mu/omega-theraphotoxin-Mb1b (Monocentropus balfouri (Socotra Island blue baboon tarantula)).